A 1693-amino-acid chain; its full sequence is MEAHQFIKAPGITTAIEQAALAAANSALANAVVVRPFLSHQQIEILINLMQPRQLVFRPEVFWNHPIQRVIHNELELYCRARSGRCLEIGAHPRSINDNPNVVHRCFLRPAGRDVQRWYTAPTRGPAANCRRSALRGLPAADRTYCFDGFSGCNFPAETGVALYSLHDMSPSDVAEAMFRHGMTRLYAALHLPPEVLLPPGTYRTASYLLIHDGRRVVVTYEGDTSAGYNHDVSNLRSWIRTTKVTGDHPLVIERVRAIGCHFVLLLTAAPEPSPTPYVPYPRSTEVYVRSIFGPGGTPSLFPTSCSTKSTFHAVPAHIWDRLMLFGATLDDQAFCCSRLMTYLRGISYKVTVGTLVANEGWNASEVALTAVITAAYLTICHQRYLRTQAISKGMRRLEREHAQKFITRLYSWLFEKSGRDYIPGRQLEFYAQCRRWLSAGFHLDPRVLVFDESAPCHCRTAIRKAVSKFCCFMKWLGQECTCFLQPAEGAVGDQGHDNEAYEGSDVDPAESAISDISGSYVVPGTALQPLYQALDLPAEIVARAGRLTATVKVSQVDGRIDCETLLGNKTFRTSFVDGAVLETNGPERHNLSFDASQSTMAAGPFSLTYAASAAGLEVRYVAAGLDHRAVFAPGVSPRSAPGEVTAFCSALYRFNREAQRLSLTGNFWFHPEGLLGPFAPFSPGHVWESANPFCGESTLYTRTWSEVDAVSSPAQPDLGFISEPSIPSRAATLTPAAPLPPPAPDPSPTPSAPARGEPAPGATARAPAITHQAARHRRLLFTYPDGSKVFAGSLFESTCTWLVNASNVDHRPGGGLCHAFYQRYPASFDAASFVMRDGAAAYTLTPRPIIHAVAPDYRLEHNPKMLEAAYRETCSRLGTAAYPLLGTGIYQVPIGPSFDAWERNHRPGDELYLPELAARWFEANRPTCPTLTITEDVARTANLAIELDSATDVGRACAGCRVTPGVVQYQFTAGVPGSGKSRSITQADVDVVVVPTRELRNAWRRRGFAAFTPHTAARVTQGRRVVIDEAPSLPPHLLLLHMQRAATVHLLGDPNQIPAIDFEHAGLVPAIRPDLAPTSWWHVTHRCPADVCELIRGAYPMIQTTSRVLRSLFWGEPAVGQKLVFTQAAKAANPGSVTVHEAQGATYTETTIIATADARGLIQSSRAHAIVALTRHTEKCVIIDAPGLLREVGISDAIVNNFFLAGGEIGHQRPSVIPRGNPDANVDTLAAFPPSCQISAFHQLAEELGHRPAPVAAVLPPCPELEQGLLYLPQELTTCDSVVTFELTDIVHCRMAAPSQRKAVLSTLVGHYGRRTKLYNASHSDVRDSLARFIPAIGHVQVTTCELYELVEAMVEKGQDGSAVLELDLCNRDVSRITFFQKDCNKFTTGETIAHGKVGQGISAWSKTFCALFGPWFRAIEKAILALLPQGVFYGDAFDDTVFSAAVAAARASMVFENDFSEFDSTQNNFSLGLECAIMVECGMPQWLIRLYHLIRSAWILQAPKESLRGFWKKHSGEPGTLLWNTVWNMAVITHCYDFRDLQVAAFKGDDSIVLCSEYRQSPGAAVLIAGCGLKLKVDFRPIGLYAGVVVAPGLGALPDVVRFAGRLTEKNWGPGPERAKQLRLAVSDFLRKLTNVAQMCVDVVSRVYGVSPGLVHNLIGMLQAVADGKAHFTESVKPVLDLTNSILCRVE.

Positions 56–240 constitute an Alphavirus-like MT domain; it reads VFRPEVFWNH…HDVSNLRSWI (185 aa). Positions 241–439 are Y-domain; that stretch reads RTTKVTGDHP…FYAQCRRWLS (199 aa). Cys434 and Cys481 are joined by a disulfide. Residues 442 to 509 are protease; it reads FHLDPRVLVF…EAYEGSDVDP (68 aa). A zinc-binding region spans residues 510-691; the sequence is AESAISDISG…FSPGHVWESA (182 aa). 3 residues coordinate Zn(2+): His671, Glu673, and His686. Residues 712 to 770 are hinge; that stretch reads SSPAQPDLGFISEPSIPSRAATLTPAAPLPPPAPDPSPTPSAPARGEPAPGATARAPAI. Positions 732–768 are disordered; sequence ATLTPAAPLPPPAPDPSPTPSAPARGEPAPGATARAP. Residues 738 to 752 are compositionally biased toward pro residues; sequence APLPPPAPDPSPTPS. In terms of domain architecture, Macro spans 775-921; sequence ARHRRLLFTY…LYLPELAARW (147 aa). The (+)RNA virus helicase ATP-binding domain occupies 934–1082; that stretch reads ITEDVARTAN…RPDLAPTSWW (149 aa). The segment at 960–1204 is NTPase/helicase; sequence GCRVTPGVVQ…ISDAIVNNFF (245 aa). Position 975–982 (975–982) interacts with ATP; sequence GVPGSGKS. Residues 1083–1216 form the (+)RNA virus helicase C-terminal domain; it reads HVTHRCPADV…GGEIGHQRPS (134 aa). The segment at 1207–1693 is RNA-directed RNA polymerase; the sequence is GGEIGHQRPS…LTNSILCRVE (487 aa). One can recognise a RdRp catalytic domain in the interval 1454 to 1565; the sequence is SMVFENDFSE…LCSEYRQSPG (112 aa).

The protein belongs to the hepevirus non-structural polyprotein family. The protease domain interacts with host EIF2AK4 (via C-terminus); this interaction inhibits dimerization of EIF2AK4 and prevents EIF2AK4-mediated phosphorylation of host EIF2A. Requires Mg(2+) as cofactor. In terms of processing, ORF1 polyprotein does not seem to be processed into distinct enzymatic domains by a viral protease belonging to ORF1, but could be processed by a host serine protease like thrombin.

Its subcellular location is the host cytoplasm. The protein localises to the host perinuclear region. The catalysed reaction is GTP + S-adenosyl-L-methionine = N(7)-methyl-GTP + S-adenosyl-L-homocysteine. It carries out the reaction RNA(n) + a ribonucleoside 5'-triphosphate = RNA(n+1) + diphosphate. Putative protease: Inhibited by chymostatin. Methyltransferase: Displays a capping enzyme activity. This function is necessary since all viral RNAs are synthesized in the cytoplasm, and host capping enzymes are restricted to the nucleus. The enzymatic reaction involves a covalent link between 7-methyl-GMP and the methyltransferase, whereas eukaryotic capping enzymes form a covalent complex only with GMP. Methyltransferase catalyzes transfer of a methyl group from S-adenosylmethionine to GTP and GDP to yield m(7)GTP or m(7)GDP. GDP is a better substrate than GTP. This enzyme also displays guanylyltransferase activity to form a covalent complex, methyltransferase-m(7)GMP, from which 7-methyl-GMP is transferred to the mRNA to create the cap structure. Its function is as follows. Y-domain: Indispensable for virus replication. Functionally, putative protease: The putative protease domain, although necessary for replication of the virus, may not be a protease but rather a structural Zn(2+)-binding domain. Inhibits induction of IFN-beta by MDA5 and RIG-I pathways and down-regulates the expression of MDA5. In terms of biological role, NTPase/helicase: Multi-functional protein that exhibits NTPase and RNA unwinding activities. Hydrolyzes all NTPs efficiently and unwinds RNA duplexes containing 5' overhangs. Possesses a sequence independent RNA-5'-triphosphatase (RTPase) activity suggestive of its role in forming viral cap structure. Also participates in viral genome replication, RNA translocation and genome packaging/unpackaging. RNA-directed RNA polymerase: Plays an essential role in the virus replication. Binds to the 3'-end of the genomic RNA to initiate viral replication. The sequence is that of Non-structural polyprotein pORF1 from Homo sapiens (Human).